We begin with the raw amino-acid sequence, 68 residues long: Pleurocidin-like peptide WF4 (68 aa).

The first 22 residues, methionine 1–cysteine 22, serve as a signal peptide directing secretion. A propeptide spanning residues glycine 48–glutamate 68 is cleaved from the precursor.

This sequence belongs to the pleurocidin family.

The protein localises to the secreted. In terms of biological role, antimicrobial peptide. The sequence is that of Pleurocidin-like peptide WF4 (ple4) from Pseudopleuronectes americanus (Winter flounder).